The chain runs to 341 residues: Glyceraldehyde-3-phosphate dehydrogenase 4 (341 aa).

Residues 13-14 (RI), D35, and K85 each bind NAD(+). D-glyceraldehyde 3-phosphate is bound by residues 157-159 (SCT), T188, 217-218 (TG), and R240. Residue C158 is the Nucleophile of the active site. N322 is a binding site for NAD(+).

Belongs to the glyceraldehyde-3-phosphate dehydrogenase family. In terms of assembly, homotetramer.

The protein localises to the cytoplasm. The enzyme catalyses D-glyceraldehyde 3-phosphate + phosphate + NAD(+) = (2R)-3-phospho-glyceroyl phosphate + NADH + H(+). It participates in carbohydrate degradation; glycolysis; pyruvate from D-glyceraldehyde 3-phosphate: step 1/5. This chain is Glyceraldehyde-3-phosphate dehydrogenase 4 (gpd-4), found in Caenorhabditis elegans.